The chain runs to 554 residues: Peroxisomal membrane protein PEX29 (554 aa).

Residues 1–145 lie on the Cytoplasmic side of the membrane; that stretch reads MDSVTNFFWN…PFMIMDELIK (145 aa). Polar residues-rich tracts occupy residues 11-22 and 43-53; these read DTYNAGTPTRST and ISSGSRTSDPT. The disordered stretch occupies residues 11–73; the sequence is DTYNAGTPTR…PTSGGGFPST (63 aa). Low complexity predominate over residues 55–64; that stretch reads GSLPSSSGQP. A helical transmembrane segment spans residues 146–166; it reads ILNWTNPAYTVSIMFLYTLII. Over 167–172 the chain is Peroxisomal; that stretch reads LKPFQM. A helical transmembrane segment spans residues 173-193; the sequence is LSSLPIFYLLFCVMVPQYLYI. Topologically, residues 194-264 are cytoplasmic; the sequence is HKPNPTSYLD…LQKFAFFTNE (71 aa). A helical transmembrane segment spans residues 265-285; it reads AISSFYFIVLLIIATLNFLYM. Over 286 to 287 the chain is Peroxisomal; sequence DK. The helical transmembrane segment at 288 to 308 threads the bilayer; it reads FIKLIPMRPVLILLGWGFFIA. Residues 309 to 554 are Cytoplasmic-facing; the sequence is SHPSNREYLL…ELTDTLNSTI (246 aa). Positions 500 to 532 are disordered; sequence GVTKGSMSGGLTHSSDDDRADEESINGTIPNLN.

Belongs to the PEX28-32 family. PEX29 subfamily.

It localises to the peroxisome membrane. In terms of biological role, involved in the regulation of peroxisome number, size and distribution. The polypeptide is Peroxisomal membrane protein PEX29 (PEX29) (Saccharomyces cerevisiae (strain ATCC 204508 / S288c) (Baker's yeast)).